A 180-amino-acid chain; its full sequence is Segregation and condensation protein B (180 aa).

It belongs to the ScpB family. In terms of assembly, homodimer. Homodimerization may be required to stabilize the binding of ScpA to the Smc head domains. Component of a cohesin-like complex composed of ScpA, ScpB and the Smc homodimer, in which ScpA and ScpB bind to the head domain of Smc. The presence of the three proteins is required for the association of the complex with DNA.

The protein localises to the cytoplasm. In terms of biological role, participates in chromosomal partition during cell division. May act via the formation of a condensin-like complex containing Smc and ScpA that pull DNA away from mid-cell into both cell halves. This chain is Segregation and condensation protein B, found in Staphylococcus aureus (strain Mu3 / ATCC 700698).